We begin with the raw amino-acid sequence, 1315 residues long: Serine/threonine-protein kinase 36 (1315 aa).

The 251-residue stretch at 4–254 (YHVLEMIGEG…WPDLLYHPFI (251 aa)) folds into the Protein kinase domain. ATP contacts are provided by residues 10–18 (IGEGSFGRV) and lysine 33. Catalysis depends on aspartate 125, which acts as the Proton acceptor. Disordered regions lie at residues 312–345 (EAMQ…PRLG) and 365–405 (SWAE…RSTD). Basic and acidic residues predominate over residues 379–397 (RENRTTPDCERAFPEERPE).

Belongs to the protein kinase superfamily. Ser/Thr protein kinase family. As to quaternary structure, interacts with SPAG16 and KIF27. Mg(2+) is required as a cofactor.

Its subcellular location is the cytoplasm. It localises to the nucleus. The protein localises to the cytoskeleton. The protein resides in the cilium axoneme. The catalysed reaction is L-seryl-[protein] + ATP = O-phospho-L-seryl-[protein] + ADP + H(+). The enzyme catalyses L-threonyl-[protein] + ATP = O-phospho-L-threonyl-[protein] + ADP + H(+). Serine/threonine protein kinase which plays an important role in the sonic hedgehog (Shh) pathway by regulating the activity of GLI transcription factors. Controls the activity of the transcriptional regulators GLI1, GLI2 and GLI3 by opposing the effect of SUFU and promoting their nuclear localization. GLI2 requires an additional function of STK36 to become transcriptionally active, but the enzyme does not need to possess an active kinase catalytic site for this to occur. Required for postnatal development, possibly by regulating the homeostasis of cerebral spinal fluid or ciliary function. Essential for construction of the central pair apparatus of motile cilia. The protein is Serine/threonine-protein kinase 36 of Pongo abelii (Sumatran orangutan).